We begin with the raw amino-acid sequence, 220 residues long: Vesicle-associated membrane protein 7 (220 aa).

At 2 to 188 (AILFAVVARG…ARAMCMKNLK (187 aa)) the chain is on the cytoplasmic side. Residues 7-110 (VVARGTTILA…AMNSEFSSVL (104 aa)) enclose the Longin domain. A v-SNARE coiled-coil homology domain is found at 125–185 (QVAETQAQVD…RNLARAMCMK (61 aa)). Residues 189–209 (LTIIIIIVSIVIIYIIVSAAC) traverse the membrane as a helical; Anchor for type IV membrane protein segment. Residues 210-220 (GGLAWPSCVQK) are Vesicular-facing.

The protein belongs to the synaptobrevin family.

It is found in the cytoplasmic vesicle. Its subcellular location is the secretory vesicle membrane. It localises to the golgi apparatus. The protein resides in the trans-Golgi network membrane. The protein localises to the late endosome membrane. It is found in the lysosome membrane. Its subcellular location is the endoplasmic reticulum membrane. It localises to the phagosome membrane. The protein resides in the synapse. The protein localises to the synaptosome. Involved in the targeting and/or fusion of transport vesicles to their target membrane during transport of proteins from the early endosome to the lysosome. Required for heterotypic fusion of late endosomes with lysosomes and homotypic lysosomal fusion. Required for calcium regulated lysosomal exocytosis. Involved in the export of chylomicrons from the endoplasmic reticulum to the cis Golgi. Required for focal exocytosis of late endocytic vesicles during phagosome formation. The chain is Vesicle-associated membrane protein 7 from Gallus gallus (Chicken).